Consider the following 967-residue polypeptide: uncharacterized protein (967 aa).

The N-terminal stretch at 1–29 (MKKKLKSVLIWFLIFTFNLSLGSFREVFA) is a signal peptide. BIG2 domains are found at residues 38 to 107 (TAIT…QDGS) and 133 to 190 (LPVG…VNDG).

This is an uncharacterized protein from Clostridium acetobutylicum (strain ATCC 824 / DSM 792 / JCM 1419 / IAM 19013 / LMG 5710 / NBRC 13948 / NRRL B-527 / VKM B-1787 / 2291 / W).